We begin with the raw amino-acid sequence, 421 residues long: Putative aspartate aminotransferase, cytoplasmic 2 (421 aa).

Lys249 carries the N6-(pyridoxal phosphate)lysine modification.

This sequence belongs to the class-I pyridoxal-phosphate-dependent aminotransferase family. In terms of assembly, homodimer. The cofactor is pyridoxal 5'-phosphate.

It is found in the cytoplasm. It catalyses the reaction L-aspartate + 2-oxoglutarate = oxaloacetate + L-glutamate. The chain is Putative aspartate aminotransferase, cytoplasmic 2 (GOT1L1) from Homo sapiens (Human).